Consider the following 1011-residue polypeptide: PE-PGRS family protein PE_PGRS30 (1011 aa).

Residues 1 to 93 (MSFLLVEPDL…AAAYTGAEAA (93 aa)) enclose the PE domain. The PGRS domain stretch occupies residues 130–696 (SNAGGNGGPG…GGTGGTGGVL (567 aa)). Over residues 595–696 (GGAGGTGGDH…GGTGGTGGVL (102 aa)) the composition is skewed to gly residues. Residues 595-701 (GGAGGTGGDH…TGGVLFGQSG (107 aa)) form a disordered region. The interval 697 to 1011 (FGQSGSSGPP…PTQLAQAIAP (315 aa)) is C-terminal domain.

Belongs to the mycobacterial PE family. PGRS subfamily.

The protein resides in the secreted. It is found in the cell wall. It localises to the cell surface. Its function is as follows. Mediates suppression of pro-inflammatory immune response in macrophages via modulation of host cytokine response. Required for full virulence. Involved in inhibition of phago-lysosome fusion. The polypeptide is PE-PGRS family protein PE_PGRS30 (Mycobacterium tuberculosis (strain ATCC 25618 / H37Rv)).